Here is a 231-residue protein sequence, read N- to C-terminus: Cytochrome c oxidase assembly factor 7 (231 aa).

Sel1-like repeat units lie at residues Pro34–Glu66, Ser68–Gly104, Ile108–Phe145, Ala146–His182, and Met183–Arg218.

The protein belongs to the hcp beta-lactamase family.

Its subcellular location is the mitochondrion intermembrane space. Functionally, may be required for assembly of mitochondrial respiratory chain complexes. The polypeptide is Cytochrome c oxidase assembly factor 7 (coa7) (Xenopus tropicalis (Western clawed frog)).